Here is a 315-residue protein sequence, read N- to C-terminus: tRNA dimethylallyltransferase (315 aa).

10–17 (GPTEVGKT) is an ATP binding site. 12–17 (TEVGKT) provides a ligand contact to substrate. An interaction with substrate tRNA region spans residues 35–38 (DSMQ).

This sequence belongs to the IPP transferase family. As to quaternary structure, monomer. Requires Mg(2+) as cofactor.

It catalyses the reaction adenosine(37) in tRNA + dimethylallyl diphosphate = N(6)-dimethylallyladenosine(37) in tRNA + diphosphate. Its function is as follows. Catalyzes the transfer of a dimethylallyl group onto the adenine at position 37 in tRNAs that read codons beginning with uridine, leading to the formation of N6-(dimethylallyl)adenosine (i(6)A). This is tRNA dimethylallyltransferase from Geobacillus thermodenitrificans (strain NG80-2).